Here is a 218-residue protein sequence, read N- to C-terminus: uncharacterized protein (218 aa).

Residues 1 to 28 (MLSLQCLPPFFISVPNRSTNSCSTAPLR) constitute a chloroplast transit peptide.

Belongs to the SixA phosphatase family.

It localises to the plastid. The protein resides in the chloroplast. This is an uncharacterized protein from Arabidopsis thaliana (Mouse-ear cress).